A 466-amino-acid polypeptide reads, in one-letter code: ATP synthase subunit beta (466 aa).

Residue 156 to 163 (GGAGVGKT) participates in ATP binding.

This sequence belongs to the ATPase alpha/beta chains family. In terms of assembly, F-type ATPases have 2 components, CF(1) - the catalytic core - and CF(0) - the membrane proton channel. CF(1) has five subunits: alpha(3), beta(3), gamma(1), delta(1), epsilon(1). CF(0) has three main subunits: a(1), b(2) and c(9-12). The alpha and beta chains form an alternating ring which encloses part of the gamma chain. CF(1) is attached to CF(0) by a central stalk formed by the gamma and epsilon chains, while a peripheral stalk is formed by the delta and b chains.

The protein resides in the cell membrane. The catalysed reaction is ATP + H2O + 4 H(+)(in) = ADP + phosphate + 5 H(+)(out). Its function is as follows. Produces ATP from ADP in the presence of a proton gradient across the membrane. The catalytic sites are hosted primarily by the beta subunits. The polypeptide is ATP synthase subunit beta (Buchnera aphidicola subsp. Schizaphis graminum (strain Sg)).